Reading from the N-terminus, the 438-residue chain is Enolase (438 aa).

Gln174 contributes to the (2R)-2-phosphoglycerate binding site. Glu216 (proton donor) is an active-site residue. Residues Asp253, Glu297, and Asp324 each coordinate Mg(2+). The (2R)-2-phosphoglycerate site is built by Lys349, Arg378, Ser379, and Lys400. The active-site Proton acceptor is the Lys349.

Belongs to the enolase family. In terms of assembly, component of the RNA degradosome, a multiprotein complex involved in RNA processing and mRNA degradation. Mg(2+) is required as a cofactor.

The protein resides in the cytoplasm. Its subcellular location is the secreted. The protein localises to the cell surface. The catalysed reaction is (2R)-2-phosphoglycerate = phosphoenolpyruvate + H2O. Its pathway is carbohydrate degradation; glycolysis; pyruvate from D-glyceraldehyde 3-phosphate: step 4/5. Its function is as follows. Catalyzes the reversible conversion of 2-phosphoglycerate (2-PG) into phosphoenolpyruvate (PEP). It is essential for the degradation of carbohydrates via glycolysis. This chain is Enolase, found in Psychrobacter sp. (strain PRwf-1).